Consider the following 357-residue polypeptide: NADPH HC-toxin reductase 1 (357 aa).

NADP(+) contacts are provided by residues Arg-40, Lys-47, 68–69 (DL), 88–90 (VAT), Tyr-178, Lys-182, 207–210 (LGLV), and Thr-222. The active-site Proton donor is Lys-182.

Belongs to the NAD(P)-dependent epimerase/dehydratase family.

With respect to regulation, activity is sensitive to heat, dependent on NADPH, and inhibited by p-hydroxymercuribenzoate and disulfiram. In tandem with Hm2, NADPH-dependent Helminthosporium carbonum (HC) toxin reductase (HCTR), which inactivates HC toxin, a cyclic tetrapeptide produced by the fungus Cochliobolus carbonum to permit infection and acting as an inhibitor of host histone deacetylases (HDACs), thus conferring resistance against C.carbonum race 1 in resistant cultivars (e.g. cv. B73 and cv. Wisconsin 22). Catalyzes the production of 8-hydroxy derivative of HC-toxin via the reduction of the 8-keto group of 2-amino-9,10-epoxy-8-oxo-decanoic acid, an amino acid of the HC-toxin. In Zea mays (Maize), this protein is NADPH HC-toxin reductase 1.